Here is a 172-residue protein sequence, read N- to C-terminus: ATP synthase subunit b (172 aa).

The helical transmembrane segment at Leu-27–Glu-47 threads the bilayer.

This sequence belongs to the ATPase B chain family. As to quaternary structure, F-type ATPases have 2 components, F(1) - the catalytic core - and F(0) - the membrane proton channel. F(1) has five subunits: alpha(3), beta(3), gamma(1), delta(1), epsilon(1). F(0) has four main subunits: a(1), b(1), b'(1) and c(10-14). The alpha and beta chains form an alternating ring which encloses part of the gamma chain. F(1) is attached to F(0) by a central stalk formed by the gamma and epsilon chains, while a peripheral stalk is formed by the delta, b and b' chains.

The protein resides in the cellular thylakoid membrane. Its function is as follows. F(1)F(0) ATP synthase produces ATP from ADP in the presence of a proton or sodium gradient. F-type ATPases consist of two structural domains, F(1) containing the extramembraneous catalytic core and F(0) containing the membrane proton channel, linked together by a central stalk and a peripheral stalk. During catalysis, ATP synthesis in the catalytic domain of F(1) is coupled via a rotary mechanism of the central stalk subunits to proton translocation. In terms of biological role, component of the F(0) channel, it forms part of the peripheral stalk, linking F(1) to F(0). In Prochlorococcus marinus (strain MIT 9303), this protein is ATP synthase subunit b.